A 509-amino-acid chain; its full sequence is MGCVCSSNPEDDWMENIDVCENCHYPIVPLDSKSTLPIRTGSEVRDPLVTYEGSLPPASPLQDNLVIALHSYEPSHDGDLGFEKGEQLRILEQSGEWWKAQSLTTGQEGFIPFNFVAKANSLEPEPWFFKNLSRKDAERQLLAPGNTHGSFLIRESESTAGSFSLSVRDFDQNQGEVVKHYKIRNLDNGGFYISPRITFPGLHDLVRHYTNASDGLCTKLSRPCQTQKPQKPWWEDEWEVPRETLKLVERLGAGQFGEVWMGYYNGHTKVAVKSLKQGSMSPDAFLAEANLMKQLQHPRLVRLYAVVTQEPIYIITEYMENGSLVDFLKTPSGIKLNVNKLLDMAAQIAEGMAFIEEQNYIHRDLRAANILVSDTLSCKIADFGLARLIEDNEYTAREGAKFPIKWTAPEAINYGTFTIKSDVWSFGILLTEIVTHGRIPYPGMTNPEVIQNLEKGYRMVRPDNCPEELYHLMMLCWKERPEDRPTFDYLRSVLDDFFTATEGQYQPQP.

Residue G2 is the site of N-myristoyl glycine attachment. The interactions with CD4 and CD8 stretch occupies residues 2-72 (GCVCSSNPED…DNLVIALHSY (71 aa)). S-palmitoyl cysteine attachment occurs at residues C3 and C5. Positions 61–121 (LQDNLVIALH…PFNFVAKANS (61 aa)) constitute an SH3 domain. A Glycyl lysine isopeptide (Lys-Gly) (interchain with G-Cter in ubiquitin) cross-link involves residue K99. S102 carries the phosphoserine modification. The SH2 domain maps to 127–224 (WFFKNLSRKD…GLCTKLSRPC (98 aa)). The tract at residues 154–242 (RESESTAGSF…WWEDEWEVPR (89 aa)) is interaction with PTPRH. T159 carries the phosphothreonine modification. Phosphoserine is present on S162. Y192 is subject to Phosphotyrosine. Position 194 is a phosphoserine (S194). One can recognise a Protein kinase domain in the interval 245–498 (LKLVERLGAG…YLRSVLDDFF (254 aa)). ATP-binding positions include 251–259 (LGAGQFGEV) and K273. A Glycyl lysine isopeptide (Lys-Gly) (interchain with G-Cter in ubiquitin) cross-link involves residue K276. D364 (proton acceptor) is an active-site residue. Y394 is modified (phosphotyrosine; by autocatalysis). A Phosphotyrosine modification is found at Y505.

Belongs to the protein kinase superfamily. Tyr protein kinase family. SRC subfamily. In terms of assembly, binds to the cytoplasmic domain of cell surface receptors, such as AXL, CD2, CD4, CD5, CD8, CD44, CD45 and CD122. Also binds to effector molecules, such as PI4K, VAV1, RASA1, FYB1 and to other protein kinases including CDK1, RAF1, ZAP70 and SYK. Binds to phosphatidylinositol 3'-kinase (PI3K) from T-lymphocytes through its SH3 domain and to the tyrosine phosphorylated form of KHDRBS1/p70 through its SH2 domain. Interacts with SQSTM1. Interacts with phosphorylated LIME1. Interacts with CBLB and PTPRH. Interacts with RUNX3. Forms a signaling complex with EPHA1, PTK2B and PI3-KINASE; upon activation by EFNA1 which may regulate T-lymphocytes migration. Associates with ZAP70 and RHOH; these interactions allow LCK-mediated RHOH and CD3 subunit phosphorylations in presence of a functional ZAP70. Interacts with CEACAM1 (via cytoplasmic domain); mediates CEACAM1 phosphorylation resulting in PTPN6 recruitment that dephosphorylates TCR stimulation-induced CD247 and ZAP70. Interacts with FYB2. Interacts with CD160. Interacts with CD48. Autophosphorylated on Tyr-394, increasing enzymatic activity, this site is dephosphorylated by PTN22. Phosphorylated on Tyr-505 by CSK, decreasing activity. Dephosphorylated by PTPRC/CD45. Dephosphorylation at Tyr-394 by PTPN2 negatively regulates T-cells differentiation. Dephosphorylation at Tyr-394 by DUSP22 negatively regulates T-cell receptor signaling. Post-translationally, myristoylation is required prior to palmitoylation. In terms of processing, palmitoylation regulates association with the plasma membrane and could be mediated by ZDHHC2. 'Lys-63'-linked ubiquitinated at Lys-99 and Lys-276 by UBR2; this modification is required for autophosphorylation at Tyr-394.

Its subcellular location is the cell membrane. It is found in the cytoplasm. The protein localises to the cytosol. The enzyme catalyses L-tyrosyl-[protein] + ATP = O-phospho-L-tyrosyl-[protein] + ADP + H(+). Its activity is regulated as follows. The relative activities of the inhibitory tyrosine-protein kinase CSK and the activating tyrosine-protein phosphatase PTPRC/CD45 determine the level of LCK activity. These interactions allow rapid and efficient activation of LCK in response to TCR stimulation. Functionally, non-receptor tyrosine-protein kinase that plays an essential role in the selection and maturation of developing T-cells in the thymus and in the function of mature T-cells. Plays a key role in T-cell antigen receptor (TCR)-linked signal transduction pathways. Constitutively associated with the cytoplasmic portions of the CD4 and CD8 surface receptors. Association of the TCR with a peptide antigen-bound MHC complex facilitates the interaction of CD4 and CD8 with MHC class II and class I molecules, respectively, thereby recruiting the associated LCK protein to the vicinity of the TCR/CD3 complex. LCK then phosphorylates tyrosine residues within the immunoreceptor tyrosine-based activation motifs (ITAM) of the cytoplasmic tails of the TCR-gamma chains and CD3 subunits, initiating the TCR/CD3 signaling pathway. Once stimulated, the TCR recruits the tyrosine kinase ZAP70, that becomes phosphorylated and activated by LCK. Following this, a large number of signaling molecules are recruited, ultimately leading to lymphokine production. LCK also contributes to signaling by other receptor molecules. Associates directly with the cytoplasmic tail of CD2, which leads to hyperphosphorylation and activation of LCK. Also plays a role in the IL2 receptor-linked signaling pathway that controls the T-cell proliferative response. Binding of IL2 to its receptor results in increased activity of LCK. Is expressed at all stages of thymocyte development and is required for the regulation of maturation events that are governed by both pre-TCR and mature alpha beta TCR. Phosphorylates other substrates including RUNX3, PTK2B/PYK2, the microtubule-associated protein MAPT, RHOH or TYROBP. Interacts with UNC119; this interaction plays a crucial role in activation of LCK. The polypeptide is Proto-oncogene tyrosine-protein kinase LCK (Lck) (Rattus norvegicus (Rat)).